We begin with the raw amino-acid sequence, 298 residues long: Small ribosomal subunit biogenesis GTPase RsgA (298 aa).

One can recognise a CP-type G domain in the interval 67-228 (TNELVRPPIS…IADTPGFSSL (162 aa)). Residues 116–119 (TKMD) and 171–179 (GQSGVGKSS) each bind GTP. Residues C252, C257, H259, and C265 each contribute to the Zn(2+) site.

The protein belongs to the TRAFAC class YlqF/YawG GTPase family. RsgA subfamily. As to quaternary structure, monomer. Associates with 30S ribosomal subunit, binds 16S rRNA. Zn(2+) serves as cofactor.

The protein localises to the cytoplasm. One of several proteins that assist in the late maturation steps of the functional core of the 30S ribosomal subunit. Helps release RbfA from mature subunits. May play a role in the assembly of ribosomal proteins into the subunit. Circularly permuted GTPase that catalyzes slow GTP hydrolysis, GTPase activity is stimulated by the 30S ribosomal subunit. This Bacillus pumilus (strain SAFR-032) protein is Small ribosomal subunit biogenesis GTPase RsgA.